Consider the following 372-residue polypeptide: Transaldolase 2 (372 aa).

K140 acts as the Schiff-base intermediate with substrate in catalysis.

Belongs to the transaldolase family. Type 2 subfamily.

It is found in the cytoplasm. The enzyme catalyses D-sedoheptulose 7-phosphate + D-glyceraldehyde 3-phosphate = D-erythrose 4-phosphate + beta-D-fructose 6-phosphate. It functions in the pathway carbohydrate degradation; pentose phosphate pathway; D-glyceraldehyde 3-phosphate and beta-D-fructose 6-phosphate from D-ribose 5-phosphate and D-xylulose 5-phosphate (non-oxidative stage): step 2/3. Its function is as follows. Transaldolase is important for the balance of metabolites in the pentose-phosphate pathway. In Streptomyces avermitilis (strain ATCC 31267 / DSM 46492 / JCM 5070 / NBRC 14893 / NCIMB 12804 / NRRL 8165 / MA-4680), this protein is Transaldolase 2.